Reading from the N-terminus, the 511-residue chain is GMP synthase [glutamine-hydrolyzing] (511 aa).

The region spanning 6–196 is the Glutamine amidotransferase type-1 domain; it reads LVLVLDFGSQ…VFDVCGCTGD (191 aa). Cys-83 acts as the Nucleophile in catalysis. Catalysis depends on residues His-170 and Glu-172. One can recognise a GMPS ATP-PPase domain in the interval 197–386; sequence WSIENFIDME…LGVPDRIVWR (190 aa). Position 224–230 (224–230) interacts with ATP; the sequence is SGGVDSS.

Homodimer.

It carries out the reaction XMP + L-glutamine + ATP + H2O = GMP + L-glutamate + AMP + diphosphate + 2 H(+). Its pathway is purine metabolism; GMP biosynthesis; GMP from XMP (L-Gln route): step 1/1. Its function is as follows. Catalyzes the synthesis of GMP from XMP. The sequence is that of GMP synthase [glutamine-hydrolyzing] from Oceanobacillus iheyensis (strain DSM 14371 / CIP 107618 / JCM 11309 / KCTC 3954 / HTE831).